The sequence spans 444 residues: Na(+)-translocating NADH-quinone reductase subunit A (444 aa).

Belongs to the NqrA family. In terms of assembly, composed of six subunits; NqrA, NqrB, NqrC, NqrD, NqrE and NqrF.

The enzyme catalyses a ubiquinone + n Na(+)(in) + NADH + H(+) = a ubiquinol + n Na(+)(out) + NAD(+). NQR complex catalyzes the reduction of ubiquinone-1 to ubiquinol by two successive reactions, coupled with the transport of Na(+) ions from the cytoplasm to the periplasm. NqrA to NqrE are probably involved in the second step, the conversion of ubisemiquinone to ubiquinol. This is Na(+)-translocating NADH-quinone reductase subunit A from Shewanella amazonensis (strain ATCC BAA-1098 / SB2B).